A 346-amino-acid chain; its full sequence is Phosphoribosylformylglycinamidine cyclo-ligase (346 aa).

This sequence belongs to the AIR synthase family.

The protein localises to the cytoplasm. The catalysed reaction is 2-formamido-N(1)-(5-O-phospho-beta-D-ribosyl)acetamidine + ATP = 5-amino-1-(5-phospho-beta-D-ribosyl)imidazole + ADP + phosphate + H(+). It participates in purine metabolism; IMP biosynthesis via de novo pathway; 5-amino-1-(5-phospho-D-ribosyl)imidazole from N(2)-formyl-N(1)-(5-phospho-D-ribosyl)glycinamide: step 2/2. The protein is Phosphoribosylformylglycinamidine cyclo-ligase of Bacillus licheniformis (strain ATCC 14580 / DSM 13 / JCM 2505 / CCUG 7422 / NBRC 12200 / NCIMB 9375 / NCTC 10341 / NRRL NRS-1264 / Gibson 46).